Reading from the N-terminus, the 283-residue chain is Polyamine aminopropyltransferase (283 aa).

The 234-residue stretch at 5-238 (STWIDEYHKG…GIWSWTFASE (234 aa)) folds into the PABS domain. Residue Gln32 coordinates S-methyl-5'-thioadenosine. Spermidine contacts are provided by His63 and Asp87. Residues Glu107 and 139-140 (DG) contribute to the S-methyl-5'-thioadenosine site. Asp158 serves as the catalytic Proton acceptor. Residue 158–161 (DCSD) participates in spermidine binding.

The protein belongs to the spermidine/spermine synthase family. Homodimer or homotetramer.

It localises to the cytoplasm. It carries out the reaction S-adenosyl 3-(methylsulfanyl)propylamine + putrescine = S-methyl-5'-thioadenosine + spermidine + H(+). It functions in the pathway amine and polyamine biosynthesis; spermidine biosynthesis; spermidine from putrescine: step 1/1. Functionally, catalyzes the irreversible transfer of a propylamine group from the amino donor S-adenosylmethioninamine (decarboxy-AdoMet) to putrescine (1,4-diaminobutane) to yield spermidine. The sequence is that of Polyamine aminopropyltransferase from Prochlorococcus marinus (strain MIT 9312).